A 395-amino-acid chain; its full sequence is General transcription factor IIH subunit 2-like protein (395 aa).

A VWFA domain is found at His60–Leu236. Tyr95 carries the post-translational modification Phosphotyrosine. The segment at Cys291–Cys308 adopts a C4-type zinc-finger fold.

Belongs to the GTF2H2 family.

The protein localises to the nucleus. Component of the core-TFIIH basal transcription factor involved in nucleotide excision repair (NER) of DNA and, when complexed to CAK, in RNA transcription by RNA polymerase II. The protein is General transcription factor IIH subunit 2-like protein (GTF2H2C) of Homo sapiens (Human).